Here is a 218-residue protein sequence, read N- to C-terminus: Molybdenum cofactor guanylyltransferase (218 aa).

GTP is bound by residues 16-18 (LAG), Lys28, Asn56, Asp74, and Asp109. Residue Asp109 coordinates Mg(2+).

The protein belongs to the MobA family. Monomer. Mg(2+) is required as a cofactor.

The protein resides in the cytoplasm. It catalyses the reaction Mo-molybdopterin + GTP + H(+) = Mo-molybdopterin guanine dinucleotide + diphosphate. In terms of biological role, transfers a GMP moiety from GTP to Mo-molybdopterin (Mo-MPT) cofactor (Moco or molybdenum cofactor) to form Mo-molybdopterin guanine dinucleotide (Mo-MGD) cofactor. The polypeptide is Molybdenum cofactor guanylyltransferase (Rhizobium meliloti (strain 1021) (Ensifer meliloti)).